The primary structure comprises 457 residues: BAG family molecular chaperone regulator 4 (457 aa).

The segment covering 1–20 has biased composition (low complexity); it reads MSALRRSGYGPSDGPSYGRY. Residues 1–104 are disordered; that stretch reads MSALRRSGYG…PYPGYNSNYW (104 aa). The residue at position 7 (Ser7) is a Phosphoserine. A compositionally biased stretch (pro residues) spans 31 to 48; that stretch reads HVPPPLYPPLRPEPPQPP. An omega-N-methylarginine mark is found at Arg41, Arg54, Arg108, and Arg185. Disordered stretches follow at residues 128–335 and 348–374; these read LNSY…SDLL and YGNASSEHPSNQVPSNNLPEECFSSDE. Polar residues predominate over residues 160-193; that stretch reads YTQSNYSTEVPNTYRSPGNSPTPMSRWMYSQQDC. Positions 255–268 are enriched in low complexity; sequence PWPSAAPSAPSAGS. Positions 284 to 295 are enriched in pro residues; that stretch reads PQPPPSPPPQQP. 2 stretches are compositionally biased toward polar residues: residues 326–335 and 348–365; these read AVNNDNSDLL and YGNASSEHPSNQVPSNNL. In terms of domain architecture, BAG spans 379-456; the sequence is SIKKIIHVLE…AILEKLEKKG (78 aa).

As to quaternary structure, binds to the ATPase domain of HSP/HSC70 chaperones. Binds to the death domain of TNFRSF12. Binds to the death domain of TNFRSF1A in the absence of TNF and thereby prevents binding of adapter molecules such as TRADD or TRAF2. Interacts with PRKN.

It is found in the cytoplasm. Inhibits the chaperone activity of HSP70/HSC70 by promoting substrate release. Prevents constitutive TNFRSF1A signaling. Negative regulator of PRKN translocation to damaged mitochondria. This Mus musculus (Mouse) protein is BAG family molecular chaperone regulator 4 (Bag4).